Here is a 131-residue protein sequence, read N- to C-terminus: Translation initiation factor 5A (131 aa).

K36 carries the post-translational modification Hypusine.

The protein belongs to the eIF-5A family.

The protein resides in the cytoplasm. Functions by promoting the formation of the first peptide bond. This Saccharolobus solfataricus (strain ATCC 35092 / DSM 1617 / JCM 11322 / P2) (Sulfolobus solfataricus) protein is Translation initiation factor 5A.